The sequence spans 86 residues: MEFKIMSKVDNIEQKVIKVIADNQGKKIEEISVDSRFAEDLGVDSLSTVEIMMEIEKEFGVDVPDEEATKIKKVADVVNYIKEHKS.

The region spanning 7-85 (SKVDNIEQKV…DVVNYIKEHK (79 aa)) is the Carrier domain. Ser45 is modified (O-(pantetheine 4'-phosphoryl)serine).

The protein belongs to the acyl carrier protein (ACP) family. Post-translationally, 4'-phosphopantetheine is transferred from CoA to a specific serine of apo-ACP by AcpS. This modification is essential for activity because fatty acids are bound in thioester linkage to the sulfhydryl of the prosthetic group.

The protein resides in the cytoplasm. The protein operates within lipid metabolism; fatty acid biosynthesis. In terms of biological role, carrier of the growing fatty acid chain in fatty acid biosynthesis. This is Acyl carrier protein from Rickettsia bellii (strain RML369-C).